Reading from the N-terminus, the 264-residue chain is MFFFHKIVIPIIIGIIQGITEFFPVSSTGHMIIFIDWLDIKNKDTKILEIFVQLGSTISVFLFFYKKIIQILQLPMQKESNEKKNIHVLISILPTMFLGLIFYNKIKSLFNPTNVMYALILGGFFLIIAEKFKPKKPKTNSIKEINLVQSLIIGCFQTLCLYPGFSRSGASIAIATLLGFKRSVAVNFSFIISIPLIAGASVLDLIKNIQNVNMLNIPYLFSGFTISFIISFLLIKKFITILNKVSLTFFGIYRFLIAGIIYFI.

A run of 8 helical transmembrane segments spans residues 7 to 27 (IVIP…PVSS), 45 to 65 (TKIL…LFFY), 86 to 106 (IHVL…YNKI), 109 to 129 (LFNP…LIIA), 145 to 165 (INLV…YPGF), 186 to 206 (VNFS…LDLI), 215 to 235 (LNIP…FLLI), and 244 to 264 (KVSL…IYFI).

It belongs to the UppP family.

The protein resides in the cell membrane. The catalysed reaction is di-trans,octa-cis-undecaprenyl diphosphate + H2O = di-trans,octa-cis-undecaprenyl phosphate + phosphate + H(+). Its function is as follows. Catalyzes the dephosphorylation of undecaprenyl diphosphate (UPP). Confers resistance to bacitracin. The sequence is that of Undecaprenyl-diphosphatase from Buchnera aphidicola subsp. Schizaphis graminum (strain Sg).